The chain runs to 217 residues: 3-demethoxyubiquinol 3-hydroxylase (217 aa).

The Fe cation site is built by Glu66, Glu96, His99, Glu148, Glu180, and His183.

Belongs to the COQ7 family. Fe cation serves as cofactor.

It localises to the cell membrane. It catalyses the reaction a 5-methoxy-2-methyl-3-(all-trans-polyprenyl)benzene-1,4-diol + AH2 + O2 = a 3-demethylubiquinol + A + H2O. It participates in cofactor biosynthesis; ubiquinone biosynthesis. In terms of biological role, catalyzes the hydroxylation of 2-nonaprenyl-3-methyl-6-methoxy-1,4-benzoquinol during ubiquinone biosynthesis. This Ralstonia pickettii (strain 12J) protein is 3-demethoxyubiquinol 3-hydroxylase.